The chain runs to 200 residues: Imidazoleglycerol-phosphate dehydratase (200 aa).

It belongs to the imidazoleglycerol-phosphate dehydratase family.

The protein resides in the cytoplasm. The enzyme catalyses D-erythro-1-(imidazol-4-yl)glycerol 3-phosphate = 3-(imidazol-4-yl)-2-oxopropyl phosphate + H2O. It functions in the pathway amino-acid biosynthesis; L-histidine biosynthesis; L-histidine from 5-phospho-alpha-D-ribose 1-diphosphate: step 6/9. The polypeptide is Imidazoleglycerol-phosphate dehydratase (Bifidobacterium animalis subsp. lactis (strain AD011)).